The following is a 271-amino-acid chain: Putative phosphoenolpyruvate synthase regulatory protein (271 aa).

152 to 159 contacts ADP; that stretch reads GVSRSGKT.

The protein belongs to the pyruvate, phosphate/water dikinase regulatory protein family. PSRP subfamily.

It carries out the reaction [pyruvate, water dikinase] + ADP = [pyruvate, water dikinase]-phosphate + AMP + H(+). The catalysed reaction is [pyruvate, water dikinase]-phosphate + phosphate + H(+) = [pyruvate, water dikinase] + diphosphate. Functionally, bifunctional serine/threonine kinase and phosphorylase involved in the regulation of the phosphoenolpyruvate synthase (PEPS) by catalyzing its phosphorylation/dephosphorylation. The protein is Putative phosphoenolpyruvate synthase regulatory protein of Dichelobacter nodosus (strain VCS1703A).